A 610-amino-acid polypeptide reads, in one-letter code: MTIKFLSESTINRIAAGEVIERPASVVKELVENAVDASSTKIDIILERAGKNLIIISDDGIGMTDKELEIAVERHTTSKFDESDFLNINTFGFRGEALPSIAAISKMLITSKKRDADKAFQIKLIGGNEKQVTISVHNEGTKIEIRDLFFATPARLKFLRADKTELAATVGVVKKIALAHPKISLSLTHDGKNLLKLKGQNKDAETNLKQRIIDVIGDDFIKNAAYIDFKTPDFSICGYTSSPTYNRASSEDQFLFINNRPVKDKLLQVALRVAYQDYLARDRYPICAIFLQINPQLVDVNVHPAKAEVRFHDPNYVRNLLIEAIKNALTNKSHVTSTTIASDALELFKNPLVNKQSPVSKVINVNSKSADYRPTTHSTLNTVPQNHVCQKLIDTLSHAKIEQEVENHIEHEQQTRKQYKLGAAKAQLHTTYIISQTEDSIVITDQHAAHERLGYEKIKDYLKTEELIKQRLLIPEIVELPNEKKADCLYDHREKLYKLGLTLEKFGEKSIIVTEIPNILGDVNVQKLIQDLADHLSDFGKNIALTELIEHVTETYACHYSIRAGRKLSADEMNALLRQMENTPLSGQCNHGRPTYIELKLKDIERLFGR.

Belongs to the DNA mismatch repair MutL/HexB family.

Functionally, this protein is involved in the repair of mismatches in DNA. It is required for dam-dependent methyl-directed DNA mismatch repair. May act as a 'molecular matchmaker', a protein that promotes the formation of a stable complex between two or more DNA-binding proteins in an ATP-dependent manner without itself being part of a final effector complex. This chain is DNA mismatch repair protein MutL, found in Rickettsia peacockii (strain Rustic).